We begin with the raw amino-acid sequence, 372 residues long: Partitioning defective 6 homolog beta (372 aa).

At Ser-11 the chain carries Phosphoserine. In terms of domain architecture, PB1 spans 16–96 (TMEVKSKFGA…PLLRIFIQKK (81 aa)). The tract at residues 126 to 253 (RKKPHIVISM…ITVRPANQRN (128 aa)) is interaction with PARD3 and CDC42. The Pseudo-CRIB domain maps to 133–150 (ISMPQDFRPVSSIIDVDI). The 94-residue stretch at 157-250 (RVRLYKYGTE…NLIITVRPAN (94 aa)) folds into the PDZ domain. Residues 253–272 (NNVVRNSRTSGSSGQSTDNS) are compositionally biased toward polar residues. Residues 253–292 (NNVVRNSRTSGSSGQSTDNSLLGYPQQIEPSFEPEDEDSE) are disordered.

Belongs to the PAR6 family. In terms of assembly, interacts with PARD3. Interacts with GTP-bound forms of CDC42 and RAC1. Interacts with GTP-bound RHOQ/TC10. Interacts with PALS1. Interacts with the N-terminal part of PRKCI and PRKCZ. Part of a complex with PARD3, CDC42 or RAC1 and PRKCI or PRKCZ. Part of a complex with LLGL1 and PRKCI. Interacts with PARD3B. Interacts with ECT2. In terms of tissue distribution, expressed in pancreas and in both adult and fetal kidney. Weakly expressed in placenta and lung. Not expressed in other tissues.

Its subcellular location is the cytoplasm. The protein resides in the cell membrane. It is found in the cell junction. The protein localises to the tight junction. In terms of biological role, adapter protein involved in asymmetrical cell division and cell polarization processes. Probably involved in formation of epithelial tight junctions. Association with PARD3 may prevent the interaction of PARD3 with F11R/JAM1, thereby preventing tight junction assembly. The PARD6-PARD3 complex links GTP-bound Rho small GTPases to atypical protein kinase C proteins. The sequence is that of Partitioning defective 6 homolog beta (PARD6B) from Homo sapiens (Human).